The following is a 422-amino-acid chain: MTKTSSFSAPKGVPDYVPPGSAEFVAVRDALLRAARLAGYGHIELPIFEDTGLFARGVGESTDVVTKEMYTFADRGERSVTLRPEGTAGVMRAVIEHGLDRGQLPVKLVYSGPFFRYERPQAGRYRQLQQVGVEAIGVDDPALDAEVIAIADAGFRSLGLDGFRLELTSLGDDTCRPRYRELLQEFLFGLPLDEETRRRAELNPLRVLDDKRPEVRELLADAPLMIDHLSESAKAHFEQVLGHLDALGVPYVVNPRMVRGLDYYTKTTFEFVHDGLGAQSGIGGGGRYDGLMAQLGGQPLSGIGFGLGVDRTMLALQAEGKSAGDPARCDVFGVPLGEAAKQRMVVLAAQLRAAGVRVDLAYGGRGVKGAMKAADRSGARYTLVLGDRDLAEDTIGVKDMSTGDQRQVPLGEVVGVLRSELG.

It belongs to the class-II aminoacyl-tRNA synthetase family. As to quaternary structure, homodimer.

The protein localises to the cytoplasm. The enzyme catalyses tRNA(His) + L-histidine + ATP = L-histidyl-tRNA(His) + AMP + diphosphate + H(+). This chain is Histidine--tRNA ligase, found in Nocardia farcinica (strain IFM 10152).